The chain runs to 342 residues: Heat-inducible transcription repressor HrcA (342 aa).

It belongs to the HrcA family.

In terms of biological role, negative regulator of class I heat shock genes (grpE-dnaK-dnaJ and groELS operons). Prevents heat-shock induction of these operons. The sequence is that of Heat-inducible transcription repressor HrcA from Corynebacterium efficiens (strain DSM 44549 / YS-314 / AJ 12310 / JCM 11189 / NBRC 100395).